Here is a 116-residue protein sequence, read N- to C-terminus: Large ribosomal subunit protein bL19 (116 aa).

Belongs to the bacterial ribosomal protein bL19 family.

Its function is as follows. This protein is located at the 30S-50S ribosomal subunit interface and may play a role in the structure and function of the aminoacyl-tRNA binding site. This chain is Large ribosomal subunit protein bL19, found in Mycoplasmopsis agalactiae (strain NCTC 10123 / CIP 59.7 / PG2) (Mycoplasma agalactiae).